Consider the following 92-residue polypeptide: Long neurotoxin 73 (92 aa).

The signal sequence occupies residues 1–21 (MKTLLLTLVVVTIVCLDLGDS). 5 disulfide bridges follow: Cys24/Cys41, Cys34/Cys62, Cys47/Cys51, Cys66/Cys77, and Cys78/Cys83.

This sequence belongs to the three-finger toxin family. Long-chain subfamily. Type II alpha-neurotoxin sub-subfamily. Expressed by the venom gland.

The protein localises to the secreted. In terms of biological role, binds with high affinity to muscular (alpha-1/CHRNA1) and neuronal (alpha-7/CHRNA7) nicotinic acetylcholine receptor (nAChR) and inhibits acetylcholine from binding to the receptor, thereby impairing neuromuscular and neuronal transmission. This Drysdalia coronoides (White-lipped snake) protein is Long neurotoxin 73.